Consider the following 181-residue polypeptide: Histone deacetylase complex subunit SAP30L-A (181 aa).

Disulfide bonds link cysteine 26–cysteine 27 and cysteine 35–cysteine 71. The segment at cysteine 26–histidine 74 adopts an Atypical zinc-finger fold. Residues arginine 82–isoleucine 103 form a disordered region. The Nuclear localization signal (NLS) motif lies at asparagine 83–lysine 88. An important for DNA and phosphoinositide binding region spans residues arginine 85–arginine 87.

Belongs to the SAP30 family. In terms of assembly, interacts with components of the histone deacetylase complex sin3a, hdac1 and hdac2. Binds histones and nucleosomes.

It localises to the nucleus. The protein localises to the nucleolus. Functionally, functions as a transcription repressor, probably via its interaction with histone deacetylase complexes. Involved in the functional recruitment of the class 1 Sin3-histone deacetylase complex (HDAC) to the nucleolus. Binds DNA, apparently without sequence-specificity, and bends bound double-stranded DNA. Binds phosphoinositol phosphates (phosphoinositol 3-phosphate, phosphoinositol 4-phosphate and phosphoinositol 5-phosphate) via the same basic sequence motif that mediates DNA binding and nuclear import. In Xenopus laevis (African clawed frog), this protein is Histone deacetylase complex subunit SAP30L-A (sap30l-a).